A 561-amino-acid polypeptide reads, in one-letter code: Dihydroxy-acid dehydratase 2 (561 aa).

Residue Cys-53 coordinates [2Fe-2S] cluster. A Mg(2+)-binding site is contributed by Asp-85. Cys-126 serves as a coordination point for [2Fe-2S] cluster. The Mg(2+) site is built by Asp-127 and Lys-128. Lys-128 is subject to N6-carboxylysine. Position 195 (Cys-195) interacts with [2Fe-2S] cluster. Glu-446 contacts Mg(2+). The Proton acceptor role is filled by Ser-472.

This sequence belongs to the IlvD/Edd family. As to quaternary structure, homodimer. The cofactor is [2Fe-2S] cluster. Requires Mg(2+) as cofactor.

It catalyses the reaction (2R)-2,3-dihydroxy-3-methylbutanoate = 3-methyl-2-oxobutanoate + H2O. It carries out the reaction (2R,3R)-2,3-dihydroxy-3-methylpentanoate = (S)-3-methyl-2-oxopentanoate + H2O. The protein operates within amino-acid biosynthesis; L-isoleucine biosynthesis; L-isoleucine from 2-oxobutanoate: step 3/4. Its pathway is amino-acid biosynthesis; L-valine biosynthesis; L-valine from pyruvate: step 3/4. In terms of biological role, functions in the biosynthesis of branched-chain amino acids. Catalyzes the dehydration of (2R,3R)-2,3-dihydroxy-3-methylpentanoate (2,3-dihydroxy-3-methylvalerate) into 2-oxo-3-methylpentanoate (2-oxo-3-methylvalerate) and of (2R)-2,3-dihydroxy-3-methylbutanoate (2,3-dihydroxyisovalerate) into 2-oxo-3-methylbutanoate (2-oxoisovalerate), the penultimate precursor to L-isoleucine and L-valine, respectively. The protein is Dihydroxy-acid dehydratase 2 of Acinetobacter baylyi (strain ATCC 33305 / BD413 / ADP1).